The sequence spans 100 residues: MELTPREKDKLLIFTAALLAERRKARGLKLNYPEAVALITAAIMEGARDGRTVAELMHEGTTVLGREDVMDGVAEMIPEIQVEATFPDGTKLVTVHHPIV.

It belongs to the urease gamma subunit family. As to quaternary structure, heterotrimer of UreA (gamma), UreB (beta) and UreC (alpha) subunits. Three heterotrimers associate to form the active enzyme.

The protein localises to the cytoplasm. The catalysed reaction is urea + 2 H2O + H(+) = hydrogencarbonate + 2 NH4(+). Its pathway is nitrogen metabolism; urea degradation; CO(2) and NH(3) from urea (urease route): step 1/1. The protein is Urease subunit gamma of Cupriavidus necator (strain ATCC 17699 / DSM 428 / KCTC 22496 / NCIMB 10442 / H16 / Stanier 337) (Ralstonia eutropha).